A 241-amino-acid chain; its full sequence is tRNA (guanine-N(7)-)-methyltransferase (241 aa).

S-adenosyl-L-methionine-binding residues include E71, E96, D123, and D146. Residue D146 is part of the active site. Substrate-binding positions include K150, D182, and 219–222; that span reads TKFE.

It belongs to the class I-like SAM-binding methyltransferase superfamily. TrmB family.

It carries out the reaction guanosine(46) in tRNA + S-adenosyl-L-methionine = N(7)-methylguanosine(46) in tRNA + S-adenosyl-L-homocysteine. Its pathway is tRNA modification; N(7)-methylguanine-tRNA biosynthesis. Catalyzes the formation of N(7)-methylguanine at position 46 (m7G46) in tRNA. This chain is tRNA (guanine-N(7)-)-methyltransferase, found in Pseudoalteromonas translucida (strain TAC 125).